Reading from the N-terminus, the 437-residue chain is Putrescine hydroxycinnamoyltransferase 3 (437 aa).

Catalysis depends on proton acceptor residues His151 and Asp383.

It belongs to the plant acyltransferase family. As to expression, highly expressed in roots. Expressed at low levels in shoots and flowers.

In terms of biological role, hydroxycinnamoyl transferase that catalyzes the transfer of an acyl from p-coumaryol-CoA to putrescine, to produce coumaroyl putrescine. Can use feruloyl-CoA and caffeoyl-CoA as acyl donors. This chain is Putrescine hydroxycinnamoyltransferase 3, found in Oryza sativa subsp. japonica (Rice).